We begin with the raw amino-acid sequence, 261 residues long: Carbonic anhydrase 1 (261 aa).

A2 carries the post-translational modification N-acetylalanine. An Alpha-carbonic anhydrase domain is found at 4–261; it reads PDWGYDDKNG…LKGRTVRASF (258 aa). H65 serves as the catalytic Proton donor/acceptor. The Zn(2+) site is built by H95, H97, and H120. Substrate is bound by residues T200 and 200 to 201; that span reads TH. Residues 235-261 are disordered; the sequence is EGDNPVPSQRNNRPTQPLKGRTVRASF. Residues 240–249 are compositionally biased toward polar residues; sequence VPSQRNNRPT.

This sequence belongs to the alpha-carbonic anhydrase family. The cofactor is Zn(2+).

The protein localises to the cytoplasm. It carries out the reaction hydrogencarbonate + H(+) = CO2 + H2O. It catalyses the reaction urea = cyanamide + H2O. Its activity is regulated as follows. Inhibited by acetazolamide. Catalyzes the reversible hydration of carbon dioxide. Can hydrate cyanamide to urea. The sequence is that of Carbonic anhydrase 1 (CA1) from Macaca nemestrina (Pig-tailed macaque).